The chain runs to 171 residues: Large ribosomal subunit protein uL10 (171 aa).

Belongs to the universal ribosomal protein uL10 family. As to quaternary structure, part of the ribosomal stalk of the 50S ribosomal subunit. The N-terminus interacts with L11 and the large rRNA to form the base of the stalk. The C-terminus forms an elongated spine to which L12 dimers bind in a sequential fashion forming a multimeric L10(L12)X complex.

In terms of biological role, forms part of the ribosomal stalk, playing a central role in the interaction of the ribosome with GTP-bound translation factors. This is Large ribosomal subunit protein uL10 from Paramagnetospirillum magneticum (strain ATCC 700264 / AMB-1) (Magnetospirillum magneticum).